Consider the following 348-residue polypeptide: Dihydroorotase (348 aa).

Zn(2+) contacts are provided by His14 and His16. Residues 16-18 (HLR) and Asn42 each bind substrate. Positions 100, 137, and 175 each coordinate Zn(2+). Residue Lys100 is modified to N6-carboxylysine. His137 contributes to the substrate binding site. Leu220 is a binding site for substrate. Asp248 lines the Zn(2+) pocket. Asp248 is a catalytic residue. 2 residues coordinate substrate: His252 and Ala264.

The protein belongs to the metallo-dependent hydrolases superfamily. DHOase family. Class II DHOase subfamily. As to quaternary structure, homodimer. The cofactor is Zn(2+).

The enzyme catalyses (S)-dihydroorotate + H2O = N-carbamoyl-L-aspartate + H(+). The protein operates within pyrimidine metabolism; UMP biosynthesis via de novo pathway; (S)-dihydroorotate from bicarbonate: step 3/3. Catalyzes the reversible cyclization of carbamoyl aspartate to dihydroorotate. This chain is Dihydroorotase, found in Pseudomonas putida (strain ATCC 700007 / DSM 6899 / JCM 31910 / BCRC 17059 / LMG 24140 / F1).